Here is a 623-residue protein sequence, read N- to C-terminus: Trehalase (623 aa).

The protein belongs to the glycosyl hydrolase 15 family. In terms of assembly, monomer.

It carries out the reaction alpha,alpha-trehalose + H2O = alpha-D-glucose + beta-D-glucose. The protein operates within glycan degradation; trehalose degradation; D-glucose from alpha,alpha-trehalose: step 1/1. With respect to regulation, inhibited by validamycin A. Its function is as follows. Catalyzes the hydrolysis of alpha,alpha-trehalose into two molecules of D-glucose. The protein is Trehalase of Thermoplasma volcanium (strain ATCC 51530 / DSM 4299 / JCM 9571 / NBRC 15438 / GSS1).